Here is a 485-residue protein sequence, read N- to C-terminus: Probable cytosol aminopeptidase (485 aa).

The Mn(2+) site is built by lysine 251 and aspartate 256. Residue lysine 263 is part of the active site. Positions 274, 333, and 335 each coordinate Mn(2+). Residue arginine 337 is part of the active site.

Belongs to the peptidase M17 family. Requires Mn(2+) as cofactor.

It localises to the cytoplasm. It catalyses the reaction Release of an N-terminal amino acid, Xaa-|-Yaa-, in which Xaa is preferably Leu, but may be other amino acids including Pro although not Arg or Lys, and Yaa may be Pro. Amino acid amides and methyl esters are also readily hydrolyzed, but rates on arylamides are exceedingly low.. It carries out the reaction Release of an N-terminal amino acid, preferentially leucine, but not glutamic or aspartic acids.. Its function is as follows. Presumably involved in the processing and regular turnover of intracellular proteins. Catalyzes the removal of unsubstituted N-terminal amino acids from various peptides. The polypeptide is Probable cytosol aminopeptidase (Brucella melitensis biotype 1 (strain ATCC 23456 / CCUG 17765 / NCTC 10094 / 16M)).